Consider the following 138-residue polypeptide: Small ribosomal subunit protein uS11c (138 aa).

The disordered stretch occupies residues 1-23 (MAKTIPRIGSRKNGRIGSRKNTR). Basic residues predominate over residues 9 to 23 (GSRKNGRIGSRKNTR).

It belongs to the universal ribosomal protein uS11 family. In terms of assembly, part of the 30S ribosomal subunit.

It localises to the plastid. It is found in the chloroplast. The chain is Small ribosomal subunit protein uS11c from Daucus carota (Wild carrot).